Reading from the N-terminus, the 210-residue chain is 7-carboxy-7-deazaguanine synthase (210 aa).

Substrate-binding positions include 12-14 and R27; that span reads LQG. One can recognise a Radical SAM core domain in the interval 18–210; it reads HAGRASVFCR…VQTHKSLGIR (193 aa). Positions 31, 46, and 49 each coordinate [4Fe-4S] cluster. T51 is a binding site for Mg(2+). A substrate-binding site is contributed by T90. S-adenosyl-L-methionine is bound by residues G92, 133-135, and 173-176; these read SPK and QPMD.

It belongs to the radical SAM superfamily. 7-carboxy-7-deazaguanine synthase family. Homodimer. The cofactor is [4Fe-4S] cluster. Requires S-adenosyl-L-methionine as cofactor. Mg(2+) is required as a cofactor.

The enzyme catalyses 6-carboxy-5,6,7,8-tetrahydropterin + H(+) = 7-carboxy-7-deazaguanine + NH4(+). Its pathway is purine metabolism; 7-cyano-7-deazaguanine biosynthesis. In terms of biological role, catalyzes the complex heterocyclic radical-mediated conversion of 6-carboxy-5,6,7,8-tetrahydropterin (CPH4) to 7-carboxy-7-deazaguanine (CDG), a step common to the biosynthetic pathways of all 7-deazapurine-containing compounds. The chain is 7-carboxy-7-deazaguanine synthase from Bradyrhizobium diazoefficiens (strain JCM 10833 / BCRC 13528 / IAM 13628 / NBRC 14792 / USDA 110).